Consider the following 123-residue polypeptide: CD59A glycoprotein (123 aa).

The N-terminal stretch at 1 to 23 (MRAQRGLILLLLLLAVFCSTAVS) is a signal peptide. The region spanning 24–96 (LTCYHCFQPV…CCQFNLCNKS (73 aa)) is the UPAR/Ly6 domain. 5 disulfides stabilise this stretch: C26-C50, C29-C37, C43-C63, C69-C87, and C88-C93. An N-linked (GlcNAc...) asparagine glycan is attached at N40. N-linked (GlcNAc...) asparagine glycosylation is present at N94. The propeptide at 97–123 (DGSLGKTPLLGTSVLVAILNLCFLSHL) is removed in mature form.

Interacts with T-cell surface antigen CD2. Post-translationally, N- and O-glycosylated. Expressed in all tissues examined (liver, kidney, spleen, thymus, brain and heart). Low levels in thymus. Also expressed in mononuclear cells, erythrocytes and platelets. Barely detected in neutrophils.

The protein resides in the cell membrane. It is found in the secreted. In terms of biological role, potent inhibitor of the complement membrane attack complex (MAC) action, which protects self-cells from damage during complement activation. Acts by binding to the beta-haipins of C8 (C8A and C8B) components of the assembling MAC, forming an intermolecular beta-sheet that prevents incorporation of the multiple copies of C9 required for complete formation of the osmolytic pore. This is CD59A glycoprotein from Mus musculus (Mouse).